Here is a 188-residue protein sequence, read N- to C-terminus: Probable DNA-directed RNA polymerase subunit delta (188 aa).

The HTH HARE-type domain occupies 14–83; it reads LSMIEVARAI…GENKWGLRSW (70 aa). The interval 119–188 is disordered; it reads EDAIDYSADD…EDEEDEDEEE (70 aa).

The protein belongs to the RpoE family. As to quaternary structure, RNAP is composed of a core of 2 alpha, a beta and a beta' subunits. The core is associated with a delta subunit and one of several sigma factors.

In terms of biological role, participates in both the initiation and recycling phases of transcription. In the presence of the delta subunit, RNAP displays an increased specificity of transcription, a decreased affinity for nucleic acids, and an increased efficiency of RNA synthesis because of enhanced recycling. This is Probable DNA-directed RNA polymerase subunit delta from Streptococcus equi subsp. zooepidemicus (strain H70).